Reading from the N-terminus, the 186-residue chain is Large ribosomal subunit protein bL9 (186 aa).

Residues 153 to 186 form a disordered region; sequence ELRQVKSQSQKSQQQEAKQNEVGEATDSDKADQK. The segment covering 157–169 has biased composition (low complexity); the sequence is VKSQSQKSQQQEA.

The protein belongs to the bacterial ribosomal protein bL9 family.

Functionally, binds to the 23S rRNA. In Wolbachia sp. subsp. Brugia malayi (strain TRS), this protein is Large ribosomal subunit protein bL9.